The chain runs to 118 residues: Autophagy-related protein 8D (118 aa).

The Phosphatidylethanolamine amidated glycine moiety is linked to residue G118.

It belongs to the ATG8 family. Interacts with ATG4. In terms of processing, the C-terminal Gly is amidated with phosphatidylethanolamine by an activating system similar to that for ubiquitin.

The protein resides in the cytoplasmic vesicle. The protein localises to the autophagosome membrane. It localises to the vacuole membrane. Its subcellular location is the cytoplasm. It is found in the cytoskeleton. In terms of biological role, ubiquitin-like modifier involved in autophagosomes formation. May mediate the delivery of the autophagosomes to the vacuole via the microtubule cytoskeleton. This Oryza sativa subsp. japonica (Rice) protein is Autophagy-related protein 8D (ATG8D).